Reading from the N-terminus, the 499-residue chain is Xylulose kinase (499 aa).

Residue 81–82 (MH) coordinates substrate. D239 acts as the Proton acceptor in catalysis.

The protein belongs to the FGGY kinase family.

The catalysed reaction is D-xylulose + ATP = D-xylulose 5-phosphate + ADP + H(+). Catalyzes the phosphorylation of D-xylulose to D-xylulose 5-phosphate. The protein is Xylulose kinase of Bacillus subtilis (strain 168).